Here is a 426-residue protein sequence, read N- to C-terminus: Serine--tRNA ligase (426 aa).

Residue 233-235 (TSE) coordinates L-serine. 264–266 (RAE) serves as a coordination point for ATP. L-serine is bound at residue Glu287. 351 to 354 (EISS) is an ATP binding site. Ser387 is an L-serine binding site.

Belongs to the class-II aminoacyl-tRNA synthetase family. Type-1 seryl-tRNA synthetase subfamily. As to quaternary structure, homodimer. The tRNA molecule binds across the dimer.

It localises to the cytoplasm. It carries out the reaction tRNA(Ser) + L-serine + ATP = L-seryl-tRNA(Ser) + AMP + diphosphate + H(+). The catalysed reaction is tRNA(Sec) + L-serine + ATP = L-seryl-tRNA(Sec) + AMP + diphosphate + H(+). It functions in the pathway aminoacyl-tRNA biosynthesis; selenocysteinyl-tRNA(Sec) biosynthesis; L-seryl-tRNA(Sec) from L-serine and tRNA(Sec): step 1/1. Its function is as follows. Catalyzes the attachment of serine to tRNA(Ser). Is also able to aminoacylate tRNA(Sec) with serine, to form the misacylated tRNA L-seryl-tRNA(Sec), which will be further converted into selenocysteinyl-tRNA(Sec). This is Serine--tRNA ligase from Xanthomonas campestris pv. campestris (strain 8004).